Consider the following 753-residue polypeptide: Enhancer of polycomb-like protein 1 (753 aa).

2 disordered regions span residues 1–75 (MAAA…RDLH) and 429–490 (VRTE…LPPA). Residues 46–71 (LDSNELEPSQVHHLNSNASSSSTQQP) show a composition bias toward polar residues. Positions 429 to 449 (VRTEDEEREKKREKKKQDQEL) are enriched in basic and acidic residues. Low complexity predominate over residues 450–463 (ALKQQQALQQQQQQ).

The protein belongs to the enhancer of polycomb family. As to quaternary structure, component of the NuA4 histone acetyltransferase complex.

The protein resides in the nucleus. Functionally, component of the NuA4 histone acetyltransferase complex which is involved in transcriptional activation of selected genes principally by acetylation of nucleosomal histone H4 and H2A. The NuA4 complex is also involved in DNA repair. Involved in gene silencing by neighboring heterochromatin, blockage of the silencing spreading along the chromosome, and required for cell cycle progression through G2/M. In Candida albicans (strain SC5314 / ATCC MYA-2876) (Yeast), this protein is Enhancer of polycomb-like protein 1 (EPL1).